A 119-amino-acid chain; its full sequence is Immunoglobulin heavy variable 2-5 (119 aa).

An N-terminal signal peptide occupies residues 1 to 19 (MDTLCSTLLLLTIPSWVLS). Gln-20 bears the Pyrrolidone carboxylic acid mark. The framework-1 stretch occupies residues 20–44 (QITLKESGPTLVKPTQTLTLTCTFS). Positions 20-119 (QITLKESGPT…DTATYYCAHR (100 aa)) constitute an Ig-like domain. A disulfide bridge links Cys-41 with Cys-116. A complementarity-determining-1 region spans residues 45 to 54 (GFSLSTSGVG). A framework-2 region spans residues 55–71 (VGWIRQPPGKALEWLAL). The segment at 72–78 (IYWDDDK) is complementarity-determining-2. A framework-3 region spans residues 79-116 (RYSPSLKSRLTITKDTSKNQVVLTMTNMDPVDTATYYC). The complementarity-determining-3 stretch occupies residues 117 to 119 (AHR).

As to quaternary structure, immunoglobulins are composed of two identical heavy chains and two identical light chains; disulfide-linked.

The protein localises to the secreted. The protein resides in the cell membrane. Its function is as follows. V region of the variable domain of immunoglobulin heavy chains that participates in the antigen recognition. Immunoglobulins, also known as antibodies, are membrane-bound or secreted glycoproteins produced by B lymphocytes. In the recognition phase of humoral immunity, the membrane-bound immunoglobulins serve as receptors which, upon binding of a specific antigen, trigger the clonal expansion and differentiation of B lymphocytes into immunoglobulins-secreting plasma cells. Secreted immunoglobulins mediate the effector phase of humoral immunity, which results in the elimination of bound antigens. The antigen binding site is formed by the variable domain of one heavy chain, together with that of its associated light chain. Thus, each immunoglobulin has two antigen binding sites with remarkable affinity for a particular antigen. The variable domains are assembled by a process called V-(D)-J rearrangement and can then be subjected to somatic hypermutations which, after exposure to antigen and selection, allow affinity maturation for a particular antigen. This Homo sapiens (Human) protein is Immunoglobulin heavy variable 2-5.